We begin with the raw amino-acid sequence, 233 residues long: Glucosamine-6-phosphate deaminase (233 aa).

The Proton acceptor; for enolization step role is filled by D62. N128 (for ring-opening step) is an active-site residue. H130 functions as the Proton acceptor; for ring-opening step in the catalytic mechanism. The For ring-opening step role is filled by E135.

Belongs to the glucosamine/galactosamine-6-phosphate isomerase family. NagB subfamily.

The enzyme catalyses alpha-D-glucosamine 6-phosphate + H2O = beta-D-fructose 6-phosphate + NH4(+). It functions in the pathway amino-sugar metabolism; N-acetylneuraminate degradation; D-fructose 6-phosphate from N-acetylneuraminate: step 5/5. Its function is as follows. Catalyzes the reversible isomerization-deamination of glucosamine 6-phosphate (GlcN6P) to form fructose 6-phosphate (Fru6P) and ammonium ion. In Enterococcus faecalis (strain ATCC 700802 / V583), this protein is Glucosamine-6-phosphate deaminase.